The sequence spans 261 residues: Cytochrome c oxidase subunit 3 (261 aa).

Residues 1–15 (MTHQTHAYHMVNPSP) lie on the Mitochondrial matrix side of the membrane. Residues 16 to 33 (WPLTGAFSALLLTSGLVM) traverse the membrane as a helical segment. Topologically, residues 34 to 38 (WFHYN) are mitochondrial intermembrane. The helical transmembrane segment at 39-62 (SITLLTLGLLTNILTMYQWWRDVI) threads the bilayer. The Mitochondrial matrix segment spans residues 63–77 (REGTYQGHHTPIVQK). The helical transmembrane segment at 78–99 (GLRYGMILFIVSEVFFFAGFFW) threads the bilayer. Residues 100–129 (AFYHSSLVPTHDLGGCWPPTGISPLNPLEV) are Mitochondrial intermembrane-facing. Residues 130–150 (PLLNTSVLLASGVSITWAHHS) form a helical membrane-spanning segment. Topologically, residues 151 to 156 (LMEGKR) are mitochondrial matrix. A helical membrane pass occupies residues 157–178 (NHMNQALLITIMLGLYFTILQA). Residues 179 to 198 (SEYFETSFSISDGIYGSTFF) are Mitochondrial intermembrane-facing. A helical transmembrane segment spans residues 199-224 (MATGFHGLHVIIGSTFLIVCLLRQLK). At 225-232 (FHFTSKHH) the chain is on the mitochondrial matrix side. The chain crosses the membrane as a helical span at residues 233-255 (FGFEAAAWYWHFVDVVWLFLYVS). The Mitochondrial intermembrane portion of the chain corresponds to 256 to 261 (IYWWGS).

It belongs to the cytochrome c oxidase subunit 3 family. As to quaternary structure, component of the cytochrome c oxidase (complex IV, CIV), a multisubunit enzyme composed of 14 subunits. The complex is composed of a catalytic core of 3 subunits MT-CO1, MT-CO2 and MT-CO3, encoded in the mitochondrial DNA, and 11 supernumerary subunits COX4I, COX5A, COX5B, COX6A, COX6B, COX6C, COX7A, COX7B, COX7C, COX8 and NDUFA4, which are encoded in the nuclear genome. The complex exists as a monomer or a dimer and forms supercomplexes (SCs) in the inner mitochondrial membrane with NADH-ubiquinone oxidoreductase (complex I, CI) and ubiquinol-cytochrome c oxidoreductase (cytochrome b-c1 complex, complex III, CIII), resulting in different assemblies (supercomplex SCI(1)III(2)IV(1) and megacomplex MCI(2)III(2)IV(2)).

Its subcellular location is the mitochondrion inner membrane. It catalyses the reaction 4 Fe(II)-[cytochrome c] + O2 + 8 H(+)(in) = 4 Fe(III)-[cytochrome c] + 2 H2O + 4 H(+)(out). In terms of biological role, component of the cytochrome c oxidase, the last enzyme in the mitochondrial electron transport chain which drives oxidative phosphorylation. The respiratory chain contains 3 multisubunit complexes succinate dehydrogenase (complex II, CII), ubiquinol-cytochrome c oxidoreductase (cytochrome b-c1 complex, complex III, CIII) and cytochrome c oxidase (complex IV, CIV), that cooperate to transfer electrons derived from NADH and succinate to molecular oxygen, creating an electrochemical gradient over the inner membrane that drives transmembrane transport and the ATP synthase. Cytochrome c oxidase is the component of the respiratory chain that catalyzes the reduction of oxygen to water. Electrons originating from reduced cytochrome c in the intermembrane space (IMS) are transferred via the dinuclear copper A center (CU(A)) of subunit 2 and heme A of subunit 1 to the active site in subunit 1, a binuclear center (BNC) formed by heme A3 and copper B (CU(B)). The BNC reduces molecular oxygen to 2 water molecules using 4 electrons from cytochrome c in the IMS and 4 protons from the mitochondrial matrix. The protein is Cytochrome c oxidase subunit 3 (mt-Co3) of Mus musculus (Mouse).